Here is a 237-residue protein sequence, read N- to C-terminus: Ribosomal RNA small subunit methyltransferase G (237 aa).

Residues glycine 78, phenylalanine 83, 129–130, and arginine 148 each bind S-adenosyl-L-methionine; that span reads AE. The tract at residues 218-237 is disordered; the sequence is KKETPNKYPRKAGMPNKRPL.

It belongs to the methyltransferase superfamily. RNA methyltransferase RsmG family.

The protein resides in the cytoplasm. Specifically methylates the N7 position of a guanine in 16S rRNA. The protein is Ribosomal RNA small subunit methyltransferase G of Streptococcus pneumoniae (strain ATCC BAA-255 / R6).